The sequence spans 632 residues: MQSKIQKDSPLLTQEEMYLFNCGEFYYSYRKFGAHFLEHKGRWGTYFAVWAPQARQVSVVGDFNGWCGMNHSLQKWEEQGIWTLFIPGLPTGEIYKYEILTSSGESVLKADPYAFFSEVRPHTASVIYSLEDYSWGDQAWLAQRKTRNPKVLPLSSYEIHLGSWRRTEDGRFLNYAQLVTVLIPYVKSLGYTHIEILPLMEHPYDGSWGYQITGFYACTSRYGTPHDLMYLIDQCHQAGIGVILDWVPGHFCMDAHGLGKFDGSPLYEREVHEQWGTYKFDYSRSEVRSFLISNAVFWLDVFHVDGLRVDGVSSMLYLDYGKAKGAWQPNRYGGRENLEAVGFIKQLNATLHGLYPDALLIAEEATDWQGVTGPLDQEGLGFTFKWNMGWMNDTLRYIGLDFPERRSFHQLLTFPMMYAYAESYILPLSHDEVVHGKKSLLDKMPGDYGQKFAGLRGLTTYFMTSPGKKLLFMGGEIPQFIEWREDRELDWFLMDYEMHRKYHGFVQQLNGLYLREKALWEIDGDWTGFEWIDVHNHEQGVIVFCRKGKSFQDRLVVLINFQPYNYERYRIGVEMAKGYREILNTDSTDFGGWGMTNPGLLKVEGVPWHGREFSLEIRVPALGAMILKPELA.

Catalysis depends on D310, which acts as the Nucleophile. The Proton donor role is filled by E363.

It belongs to the glycosyl hydrolase 13 family. GlgB subfamily. As to quaternary structure, monomer.

The enzyme catalyses Transfers a segment of a (1-&gt;4)-alpha-D-glucan chain to a primary hydroxy group in a similar glucan chain.. The protein operates within glycan biosynthesis; glycogen biosynthesis. Functionally, catalyzes the formation of the alpha-1,6-glucosidic linkages in glycogen by scission of a 1,4-alpha-linked oligosaccharide from growing alpha-1,4-glucan chains and the subsequent attachment of the oligosaccharide to the alpha-1,6 position. In Desulfitobacterium hafniense (strain Y51), this protein is 1,4-alpha-glucan branching enzyme GlgB.